Consider the following 1377-residue polypeptide: DNA-directed RNA polymerase subunit beta (1377 aa).

It belongs to the RNA polymerase beta chain family. As to quaternary structure, the RNAP catalytic core consists of 2 alpha, 1 beta, 1 beta' and 1 omega subunit. When a sigma factor is associated with the core the holoenzyme is formed, which can initiate transcription.

The enzyme catalyses RNA(n) + a ribonucleoside 5'-triphosphate = RNA(n+1) + diphosphate. Functionally, DNA-dependent RNA polymerase catalyzes the transcription of DNA into RNA using the four ribonucleoside triphosphates as substrates. The sequence is that of DNA-directed RNA polymerase subunit beta from Campylobacter lari (strain RM2100 / D67 / ATCC BAA-1060).